The primary structure comprises 353 residues: Probable D-xylulose reductase A (353 aa).

Residues Cys-42, His-67, and Glu-68 each contribute to the Zn(2+) site. Gly-177–Gly-182 lines the NAD(+) pocket.

This sequence belongs to the zinc-containing alcohol dehydrogenase family. Zn(2+) serves as cofactor.

The catalysed reaction is xylitol + NAD(+) = D-xylulose + NADH + H(+). It participates in carbohydrate degradation; L-arabinose degradation via L-arabinitol; D-xylulose 5-phosphate from L-arabinose (fungal route): step 4/5. In terms of biological role, xylitol dehydrogenase which catalyzes the conversion of xylitol to D-xylulose. Xylose is a major component of hemicelluloses such as xylan. Most fungi utilize D-xylose via three enzymatic reactions, xylose reductase (XR), xylitol dehydrogenase (XDH), and xylulokinase, to form xylulose 5-phosphate, which enters pentose phosphate pathway. The chain is Probable D-xylulose reductase A (xdhA) from Aspergillus terreus (strain NIH 2624 / FGSC A1156).